Here is a 364-residue protein sequence, read N- to C-terminus: Peroxidase (364 aa).

A signal peptide spans 1–20 (MKLSLFSTFAAVIIGALALP). Gln-21 carries the pyrrolidone carboxylic acid modification. Cystine bridges form between Cys-32-Cys-44, Cys-43-Cys-313, Cys-63-Cys-149, and Cys-277-Cys-342. Residue His-76 is the Proton acceptor of the active site. Asp-77, Gly-95, Asp-97, and Ser-99 together coordinate Ca(2+). N-linked (GlcNAc...) (high mannose) asparagine glycosylation occurs at Asn-163. His-204 is a binding site for heme b. Ca(2+) is bound by residues Ser-205, Asp-222, Thr-224, Val-227, and Asp-229.

It belongs to the peroxidase family. Ligninase subfamily. Ca(2+) serves as cofactor. It depends on heme b as a cofactor.

The protein localises to the secreted. It carries out the reaction 2 a phenolic donor + H2O2 = 2 a phenolic radical donor + 2 H2O. The polypeptide is Peroxidase (Arthromyces ramosus).